Consider the following 329-residue polypeptide: Beta-ketoacyl-[acyl-carrier-protein] synthase III (329 aa).

Residues Cys114 and His255 contribute to the active site. The ACP-binding stretch occupies residues 256–260 (QANQR). Residue Asn285 is part of the active site.

The protein belongs to the thiolase-like superfamily. FabH family. As to quaternary structure, homodimer.

It is found in the cytoplasm. It catalyses the reaction malonyl-[ACP] + acetyl-CoA + H(+) = 3-oxobutanoyl-[ACP] + CO2 + CoA. It functions in the pathway lipid metabolism; fatty acid biosynthesis. Its function is as follows. Catalyzes the condensation reaction of fatty acid synthesis by the addition to an acyl acceptor of two carbons from malonyl-ACP. Catalyzes the first condensation reaction which initiates fatty acid synthesis and may therefore play a role in governing the total rate of fatty acid production. Possesses both acetoacetyl-ACP synthase and acetyl transacylase activities. Its substrate specificity determines the biosynthesis of branched-chain and/or straight-chain of fatty acids. The chain is Beta-ketoacyl-[acyl-carrier-protein] synthase III from Thermosynechococcus vestitus (strain NIES-2133 / IAM M-273 / BP-1).